Reading from the N-terminus, the 159-residue chain is Transcription elongation factor GreA (159 aa).

The stretch at 46 to 73 (AEYHAAKEEQSFVEGRIKEIELKLSRMQ) forms a coiled coil.

It belongs to the GreA/GreB family.

In terms of biological role, necessary for efficient RNA polymerase transcription elongation past template-encoded arresting sites. The arresting sites in DNA have the property of trapping a certain fraction of elongating RNA polymerases that pass through, resulting in locked ternary complexes. Cleavage of the nascent transcript by cleavage factors such as GreA or GreB allows the resumption of elongation from the new 3'terminus. GreA releases sequences of 2 to 3 nucleotides. The polypeptide is Transcription elongation factor GreA (Vesicomyosocius okutanii subsp. Calyptogena okutanii (strain HA)).